Reading from the N-terminus, the 546-residue chain is Cholesterol oxidase (546 aa).

Positions 1–42 (MTAQQHLSRRRMLGMAAFGAAALAGGTTIAAPRAAAAAKSAA) form a signal peptide, tat-type signal. FAD is bound by residues Y57, G58, E77, G152, N156, G157, M159, and V287. Residues E398 and H484 each act as proton acceptor in the active site. G512 and F524 together coordinate FAD.

Belongs to the GMC oxidoreductase family. Monomer. Requires FAD as cofactor. Post-translationally, predicted to be exported by the Tat system. The position of the signal peptide cleavage has been experimentally proven.

Its subcellular location is the secreted. It carries out the reaction cholesterol + O2 = cholest-5-en-3-one + H2O2. It catalyses the reaction cholest-5-en-3-one = cholest-4-en-3-one. It participates in steroid metabolism; cholesterol degradation. Functionally, bifunctional enzyme that catalyzes the oxidation and isomerization of cholesterol to cholestenone (cholest-4-en-3-one), an initial step in the cholesterol degradation process. The cholesterol degradation pathway allows the bacterium to utilize cholesterol as its sole source of carbon and energy. This Streptomyces sp. (strain SA-COO) protein is Cholesterol oxidase.